The chain runs to 392 residues: Iripin-1 (392 aa).

The N-terminal stretch at Met-1–Ala-16 is a signal peptide. Asn-104, Asn-196, and Asn-265 each carry an N-linked (GlcNAc...) asparagine glycan.

The protein belongs to the serpin family. In terms of assembly, interacts with human KLKB1. Interacts with human ST14. Interacts with human PLG (plasmin). As to expression, highly expressed in salivary gland. Expressed in midgut and ovary.

The protein resides in the secreted. Its function is as follows. Serine protease inhibitor that modulates blood feeding of ticks on vertebrate species. Modestly inhibits human trypsin, plasma kallikrein (KLKB1), matriptase (ST14) and plasmin (PLG) via a classic serpin inhibitory mechanism. Modestly reduces enzymatic activity of human alpha-chymotrypsin, coagulation factor Xa (F10), factor XIIa (F12), cathepsin G (CTSG), tPA/tissue-type plasminogen activator (PLAT) and uPA/urokinase-type plasminogen activator (PLAU). Probably acts as a substrate rather than an inhibitor for the human neutrophil elastase (ELANE) and thus reduces its enzymatic activity in in vitro assays. Decreases expression of adhesion molecules VCAM1 and CD99 on the surface of human cells. Increases the production of chemokines for neutrophils and monocytes, such as KC/CXCL1, MIP-2/CXCL2 and MIP-1/CCL2, and anti-inflammatory cytokine IL10 in mouse inflammation models. Reduces the recruitment of mouse neutrophils and monocytes to the site of inflammation. Decreases expression of CXCR2 on the surface of mouse neutrophils. Increases expression of integrin ITGAM/ITGB2 on the surface of mouse neutrophils. The protein is Iripin-1 of Ixodes ricinus (Common tick).